We begin with the raw amino-acid sequence, 251 residues long: Protein crossbronx (251 aa).

The UBC core domain maps to glutamine 20–alanine 176. The tract at residues glutamine 211–glutamate 251 is disordered. Gly residues predominate over residues glycine 225–alanine 234.

The protein belongs to the ubiquitin-conjugating enzyme family. FTS subfamily.

This is Protein crossbronx (cbx) from Drosophila willistoni (Fruit fly).